The sequence spans 156 residues: MPRRGGIPKRDVLPDPIYGSKIATKLVNQMMLDGKRGVAEKIIYDAFEIIKEKTGKSPLEVFDAAMKNVMPVLEVKARRVGGANYQVPVEVRAERRQTLGIRWMVLFTRKRAGKSMAEKLAAEIMDAANNTGATVKKREDTHKMAEANKAFAHYRW.

This sequence belongs to the universal ribosomal protein uS7 family. Part of the 30S ribosomal subunit. Contacts proteins S9 and S11.

Its function is as follows. One of the primary rRNA binding proteins, it binds directly to 16S rRNA where it nucleates assembly of the head domain of the 30S subunit. Is located at the subunit interface close to the decoding center, probably blocks exit of the E-site tRNA. This Desulforamulus reducens (strain ATCC BAA-1160 / DSM 100696 / MI-1) (Desulfotomaculum reducens) protein is Small ribosomal subunit protein uS7.